The chain runs to 1010 residues: Contactin-1 (1010 aa).

Residues 1–19 (MRFFISHLVTLCFIFCVAD) form the signal peptide. Ig-like C2-type domains are found at residues 33 to 123 (PVFE…ATLS), 132 to 215 (PEEH…KSVF), 232 to 317 (PADI…ARVY), 322 to 398 (PEWV…AELK), 404 to 491 (PTFE…GVLE), and 496 to 592 (TRIT…LVVR). 2 disulfide bridges follow: Cys57-Cys106 and Cys150-Cys203. Residues Asn200 and Asn249 are each glycosylated (N-linked (GlcNAc...) asparagine). Cysteines 254 and 301 form a disulfide. A glycan (N-linked (GlcNAc...) asparagine) is linked at Asn329. Intrachain disulfides connect Cys343-Cys382 and Cys427-Cys475. 4 N-linked (GlcNAc...) asparagine glycosylation sites follow: Asn448, Asn464, Asn485, and Asn512. A disulfide bridge links Cys517 with Cys574. Asn582 is a glycosylation site (N-linked (GlcNAc...) asparagine). Fibronectin type-III domains lie at 597-695 (PPGG…TEGA), 700-797 (APSD…SAQD), 802-897 (VPTD…APPS), and 899-990 (RPRI…TAGV). A compositionally biased stretch (polar residues) spans 679–689 (GTGEPSMPSQR). The disordered stretch occupies residues 679-708 (GTGEPSMPSQRIRTEGAPPNVAPSDVGGGG). Asn924 carries an N-linked (GlcNAc...) asparagine glycan. A lipid anchor (GPI-anchor amidated serine) is attached at Ser984. Positions 985–1010 (GATAGVPTLLLGLVLPALGVLAYSGF) are cleaved as a propeptide — removed in mature form.

Belongs to the immunoglobulin superfamily. Contactin family. Interacts with TNR.

It is found in the cell membrane. Functionally, mediates cell surface interactions during nervous system development. Interaction with TNR enhances the neurite outgrowth. This is Contactin-1 (CNTN1) from Gallus gallus (Chicken).